The primary structure comprises 333 residues: DNA-directed RNA polymerase subunit alpha (333 aa).

The segment at 1 to 233 is alpha N-terminal domain (alpha-NTD); the sequence is MVREKIRVST…DLFIPFLHAE (233 aa). Residues 269-333 form an alpha C-terminal domain (alpha-CTD) region; that stretch reads IALKYIFIDQ…DILEMEKNFA (65 aa).

It belongs to the RNA polymerase alpha chain family. As to quaternary structure, in plastids the minimal PEP RNA polymerase catalytic core is composed of four subunits: alpha, beta, beta', and beta''. When a (nuclear-encoded) sigma factor is associated with the core the holoenzyme is formed, which can initiate transcription.

Its subcellular location is the plastid. The protein resides in the chloroplast. It carries out the reaction RNA(n) + a ribonucleoside 5'-triphosphate = RNA(n+1) + diphosphate. Functionally, DNA-dependent RNA polymerase catalyzes the transcription of DNA into RNA using the four ribonucleoside triphosphates as substrates. The protein is DNA-directed RNA polymerase subunit alpha of Cucumis sativus (Cucumber).